A 245-amino-acid chain; its full sequence is uncharacterized protein (245 aa).

An N-terminal signal peptide occupies residues M1–A19.

Its subcellular location is the secreted. This is an uncharacterized protein from Arthroderma benhamiae (strain ATCC MYA-4681 / CBS 112371) (Trichophyton mentagrophytes).